The sequence spans 623 residues: Transketolase (623 aa).

Methionine 1 bears the N-acetylmethionine mark. Position 3 is a phosphoserine (serine 3). An N6-acetyllysine mark is found at lysine 6 and lysine 11. Substrate is bound at residue histidine 37. Thiamine diphosphate-binding residues include serine 40 and histidine 77. A Phosphoserine modification is found at serine 104. Residue 123 to 125 (GSL) participates in thiamine diphosphate binding. At lysine 144 the chain carries N6-acetyllysine. Aspartate 155 is a binding site for Mg(2+). Thiamine diphosphate is bound by residues glycine 156 and asparagine 185. Asparagine 185 and leucine 187 together coordinate Mg(2+). N6-acetyllysine is present on residues lysine 204, lysine 232, and lysine 241. Residues lysine 244 and histidine 258 each contribute to the thiamine diphosphate site. Substrate is bound at residue histidine 258. The residue at position 260 (lysine 260) is an N6-acetyllysine. Tyrosine 275 carries the phosphotyrosine modification. Phosphothreonine is present on threonine 287. At serine 295 the chain carries Phosphoserine. Residues arginine 318 and serine 345 each coordinate substrate. Serine 345 bears the Phosphoserine mark. Lysine 352 participates in a covalent cross-link: Glycyl lysine isopeptide (Lys-Gly) (interchain with G-Cter in SUMO2). The active-site Proton donor is glutamate 366. Phenylalanine 392 is a thiamine diphosphate binding site. Substrate-binding residues include histidine 416 and aspartate 424. Glutamine 428 contacts thiamine diphosphate. Arginine 474 is a binding site for substrate. Residues lysine 538 and lysine 603 each carry the N6-acetyllysine modification.

This sequence belongs to the transketolase family. As to quaternary structure, homodimer. Mg(2+) is required as a cofactor. The cofactor is Ca(2+). Mn(2+) serves as cofactor. It depends on Co(2+) as a cofactor. Requires thiamine diphosphate as cofactor.

It catalyses the reaction D-sedoheptulose 7-phosphate + D-glyceraldehyde 3-phosphate = aldehydo-D-ribose 5-phosphate + D-xylulose 5-phosphate. Catalyzes the transfer of a two-carbon ketol group from a ketose donor to an aldose acceptor, via a covalent intermediate with the cofactor thiamine pyrophosphate. This chain is Transketolase (TKT), found in Homo sapiens (Human).